Reading from the N-terminus, the 489-residue chain is Dihydropyrimidinase 1 (489 aa).

Positions 61, 63, and 156 each coordinate Zn(2+). Residue Lys-156 is modified to N6-carboxylysine. Position 161 (Tyr-161) interacts with substrate. His-189 and His-245 together coordinate Zn(2+). A substrate-binding site is contributed by Ser-295. Residue Asp-323 participates in Zn(2+) binding. Asn-344 contributes to the substrate binding site.

It belongs to the metallo-dependent hydrolases superfamily. Hydantoinase/dihydropyrimidinase family. In terms of assembly, homotetramer. It depends on Zn(2+) as a cofactor. Carboxylation allows a single lysine to coordinate two zinc ions.

It localises to the nucleus. The enzyme catalyses 5,6-dihydrouracil + H2O = 3-(carbamoylamino)propanoate + H(+). The chain is Dihydropyrimidinase 1 (dhp-1) from Caenorhabditis briggsae.